A 1022-amino-acid chain; its full sequence is Translation initiation factor IF-2 (1022 aa).

Over residues 82–94 (EQSRKTLEKEQHL) the composition is skewed to basic and acidic residues. 2 disordered regions span residues 82-129 (EQSR…AVPA) and 342-436 (SENK…QREL). The span at 104–115 (ASKSSAKGSESA) shows a compositional bias: low complexity. Residues 375–384 (KAKKGKKKKK) are compositionally biased toward basic residues. Positions 421–436 (SEREREQEEGAAQREL) are enriched in basic and acidic residues. The region spanning 519 to 689 (TRPPVVTIMG…LTEAELRELK (171 aa)) is the tr-type G domain. The tract at residues 528–535 (GHVDHGKT) is G1. Position 528-535 (528-535 (GHVDHGKT)) interacts with GTP. The tract at residues 553–557 (GITQH) is G2. The interval 575 to 578 (DTPG) is G3. GTP is bound by residues 575-579 (DTPGH) and 629-632 (NKID). The interval 629 to 632 (NKID) is G4. A G5 region spans residues 665–667 (SAK).

Belongs to the TRAFAC class translation factor GTPase superfamily. Classic translation factor GTPase family. IF-2 subfamily.

The protein localises to the cytoplasm. One of the essential components for the initiation of protein synthesis. Protects formylmethionyl-tRNA from spontaneous hydrolysis and promotes its binding to the 30S ribosomal subunits. Also involved in the hydrolysis of GTP during the formation of the 70S ribosomal complex. In Chlorobium chlorochromatii (strain CaD3), this protein is Translation initiation factor IF-2.